Reading from the N-terminus, the 235-residue chain is Adenosine 5'-phosphosulfate reductase (235 aa).

The [4Fe-4S] cluster site is built by Cys-121, Cys-122, Cys-204, and Cys-207. Cys-230 serves as the catalytic Nucleophile; cysteine thiosulfonate intermediate.

This sequence belongs to the PAPS reductase family. CysH subfamily. Requires [4Fe-4S] cluster as cofactor.

Its subcellular location is the cytoplasm. It catalyses the reaction [thioredoxin]-disulfide + sulfite + AMP + 2 H(+) = adenosine 5'-phosphosulfate + [thioredoxin]-dithiol. Its pathway is sulfur metabolism; hydrogen sulfide biosynthesis; sulfite from sulfate. Catalyzes the formation of sulfite from adenosine 5'-phosphosulfate (APS) using thioredoxin as an electron donor. This chain is Adenosine 5'-phosphosulfate reductase, found in Anoxybacillus flavithermus (strain DSM 21510 / WK1).